The following is a 490-amino-acid chain: tRNA-guanine(15) transglycosylase (490 aa).

Aspartate 90 serves as the catalytic Nucleophile. Aspartate 125 and alanine 193 together coordinate substrate. Residues cysteine 276, cysteine 278, and cysteine 281 each coordinate Zn(2+).

This sequence belongs to the archaeosine tRNA-ribosyltransferase family. The cofactor is Zn(2+).

It catalyses the reaction guanosine(15) in tRNA + 7-cyano-7-deazaguanine = 7-cyano-7-carbaguanosine(15) in tRNA + guanine. The protein operates within tRNA modification; archaeosine-tRNA biosynthesis. Exchanges the guanine residue with 7-cyano-7-deazaguanine (preQ0) at position 15 in the dihydrouridine loop (D-loop) of archaeal tRNAs. The sequence is that of tRNA-guanine(15) transglycosylase from Methanosarcina barkeri (strain Fusaro / DSM 804).